The chain runs to 1026 residues: RecBCD enzyme subunit RecB (1026 aa).

A UvrD-like helicase ATP-binding domain is found at 1 to 438; sequence MSSFDIFSPT…LILDTNYRST (438 aa). The interval 1–766 is DNA-binding and helicase activity, interacts with RecC; that stretch reads MSSFDIFSPT…LANYANITQH (766 aa). 21 to 28 is a binding site for ATP; that stretch reads ASAGTGKT. The 249-residue stretch at 452–700 folds into the UvrD-like helicase C-terminal domain; it reads PSPFLETPQT…KITTVHSSKG (249 aa). The tract at residues 815-1026 is nuclease activity, interacts with RecD and RecA; it reads SQPIYSFSST…KGNGFLQPSP (212 aa). Histidine 854, aspartate 940, and aspartate 953 together coordinate Mg(2+). The active-site For nuclease activity is the aspartate 953.

The protein belongs to the helicase family. UvrD subfamily. As to quaternary structure, heterotrimer of RecB, RecC and RecD. All subunits contribute to DNA-binding. Interacts with RecA. It depends on Mg(2+) as a cofactor.

The enzyme catalyses Exonucleolytic cleavage (in the presence of ATP) in either 5'- to 3'- or 3'- to 5'-direction to yield 5'-phosphooligonucleotides.. It catalyses the reaction Couples ATP hydrolysis with the unwinding of duplex DNA by translocating in the 3'-5' direction.. It carries out the reaction ATP + H2O = ADP + phosphate + H(+). A helicase/nuclease that prepares dsDNA breaks (DSB) for recombinational DNA repair. Binds to DSBs and unwinds DNA via a highly rapid and processive ATP-dependent bidirectional helicase activity. Unwinds dsDNA until it encounters a Chi (crossover hotspot instigator) sequence from the 3' direction. Cuts ssDNA a few nucleotides 3' to the Chi site. The properties and activities of the enzyme are changed at Chi. The Chi-altered holoenzyme produces a long 3'-ssDNA overhang and facilitates RecA-binding to the ssDNA for homologous DNA recombination and repair. Holoenzyme degrades any linearized DNA that is unable to undergo homologous recombination. In the holoenzyme this subunit contributes ATPase, 3'-5' helicase, exonuclease activity and loads RecA onto ssDNA. This Chlamydia muridarum (strain MoPn / Nigg) protein is RecBCD enzyme subunit RecB.